The sequence spans 386 residues: Cystathionine gamma-synthase (386 aa).

At Lys-198 the chain carries N6-(pyridoxal phosphate)lysine.

It belongs to the trans-sulfuration enzymes family. In terms of assembly, homotetramer. Pyridoxal 5'-phosphate serves as cofactor.

The protein resides in the cytoplasm. The enzyme catalyses O-succinyl-L-homoserine + L-cysteine = L,L-cystathionine + succinate + H(+). It participates in amino-acid biosynthesis; L-methionine biosynthesis via de novo pathway; L-cystathionine from O-succinyl-L-homoserine: step 1/1. Catalyzes the formation of L-cystathionine from O-succinyl-L-homoserine (OSHS) and L-cysteine, via a gamma-replacement reaction. In the absence of thiol, catalyzes gamma-elimination to form 2-oxobutanoate, succinate and ammonia. The protein is Cystathionine gamma-synthase (metB) of Escherichia coli (strain K12).